We begin with the raw amino-acid sequence, 251 residues long: tRNA (guanine-N(1)-)-methyltransferase (251 aa).

S-adenosyl-L-methionine contacts are provided by residues G113 and I133–L138.

The protein belongs to the RNA methyltransferase TrmD family. Homodimer.

The protein resides in the cytoplasm. The enzyme catalyses guanosine(37) in tRNA + S-adenosyl-L-methionine = N(1)-methylguanosine(37) in tRNA + S-adenosyl-L-homocysteine + H(+). Functionally, specifically methylates guanosine-37 in various tRNAs. The chain is tRNA (guanine-N(1)-)-methyltransferase from Methylococcus capsulatus (strain ATCC 33009 / NCIMB 11132 / Bath).